The following is a 342-amino-acid chain: L-threonine 3-dehydrogenase (342 aa).

Cys-38 serves as a coordination point for Zn(2+). Catalysis depends on charge relay system residues Thr-40 and His-43. Zn(2+)-binding residues include His-63, Glu-64, Cys-93, Cys-96, Cys-99, and Cys-107. NAD(+)-binding positions include Ile-175, Asp-195, Arg-200, 262–264, and 286–287; these read LGL and IY.

The protein belongs to the zinc-containing alcohol dehydrogenase family. Homotetramer. Requires Zn(2+) as cofactor.

The protein resides in the cytoplasm. The catalysed reaction is L-threonine + NAD(+) = (2S)-2-amino-3-oxobutanoate + NADH + H(+). Its pathway is amino-acid degradation; L-threonine degradation via oxydo-reductase pathway; glycine from L-threonine: step 1/2. Its function is as follows. Catalyzes the NAD(+)-dependent oxidation of L-threonine to 2-amino-3-ketobutyrate. The chain is L-threonine 3-dehydrogenase from Streptomyces coelicolor (strain ATCC BAA-471 / A3(2) / M145).